The primary structure comprises 343 residues: D-alanine--D-alanine ligase (343 aa).

Residues 129–335 (KYVLENFGVK…YGELISEIIE (207 aa)) form the ATP-grasp domain. 162–217 (ENKLGYDVFIKPSNSGSSVGISKAHNREELEAGLEEALKFDRKVLVEVALNAREIE) lines the ATP pocket. 3 residues coordinate Mg(2+): Asp-288, Glu-302, and Asn-304.

The protein belongs to the D-alanine--D-alanine ligase family. Requires Mg(2+) as cofactor. Mn(2+) is required as a cofactor.

Its subcellular location is the cytoplasm. The enzyme catalyses 2 D-alanine + ATP = D-alanyl-D-alanine + ADP + phosphate + H(+). It functions in the pathway cell wall biogenesis; peptidoglycan biosynthesis. Functionally, cell wall formation. The polypeptide is D-alanine--D-alanine ligase (Clostridium novyi (strain NT)).